A 629-amino-acid chain; its full sequence is Protein fem-1 homolog B (629 aa).

6 ANK repeats span residues 47–77, 89–118, 122–151, 155–184, 188–217, and 220–250; these read QRST…DVQQ, DGAT…NVNH, TNST…NISI, YDNT…DPNA, CGAT…AMVV, and HGMT…DAKS. A TPR repeat occupies 346–379; it reads SHPIIYRGAVYADNMQFEQCIKLWLHALQLRQKG. ANK repeat units lie at residues 485–529 and 533–570; these read EGGS…NVNA and MGNS…HTDM.

It belongs to the fem-1 family. Component of a CRL2 E3 ubiquitin-protein ligase complex, also named ECS (Elongin BC-CUL2/5-SOCS-box protein) complex.

Its subcellular location is the cytoplasm. It is found in the nucleus. Its pathway is protein modification; protein ubiquitination. In terms of biological role, substrate-recognition component of a Cul2-RING (CRL2) E3 ubiquitin-protein ligase complex of the DesCEND (destruction via C-end degrons) pathway, which recognizes a C-degron located at the extreme C terminus of target proteins, leading to their ubiquitination and degradation. The C-degron recognized by the DesCEND pathway is usually a motif of less than ten residues and can be present in full-length proteins, truncated proteins or proteolytically cleaved forms. The CRL2(FEM1B) complex specifically recognizes proteins ending with -Gly-Leu-Asp-Arg, leading to their ubiquitination and degradation. The protein is Protein fem-1 homolog B of Xenopus laevis (African clawed frog).